Reading from the N-terminus, the 218-residue chain is Hypoxanthine-guanine phosphoribosyltransferase (218 aa).

Residue Ala2 is modified to N-acetylalanine. Position 69 (Lys69) interacts with GMP. Lys103 bears the N6-acetyllysine mark. Residue Lys115 forms a Glycyl lysine isopeptide (Lys-Gly) (interchain with G-Cter in SUMO1); alternate linkage. A Glycyl lysine isopeptide (Lys-Gly) (interchain with G-Cter in SUMO2); alternate cross-link involves residue Lys115. GMP is bound by residues 134-142, Lys166, 186-188, and Asp194; these read EDIIDTGKT and KFV. Residue Asp138 is the Proton acceptor of the active site. The residue at position 142 (Thr142) is a Phosphothreonine. Asp194 serves as a coordination point for Mg(2+).

The protein belongs to the purine/pyrimidine phosphoribosyltransferase family. In terms of assembly, homotetramer. Requires Mg(2+) as cofactor.

It localises to the cytoplasm. It catalyses the reaction IMP + diphosphate = hypoxanthine + 5-phospho-alpha-D-ribose 1-diphosphate. The enzyme catalyses GMP + diphosphate = guanine + 5-phospho-alpha-D-ribose 1-diphosphate. The protein operates within purine metabolism; IMP biosynthesis via salvage pathway; IMP from hypoxanthine: step 1/1. Its function is as follows. Converts guanine to guanosine monophosphate, and hypoxanthine to inosine monophosphate. Transfers the 5-phosphoribosyl group from 5-phosphoribosylpyrophosphate onto the purine. Plays a central role in the generation of purine nucleotides through the purine salvage pathway. The chain is Hypoxanthine-guanine phosphoribosyltransferase (HPRT1) from Canis lupus familiaris (Dog).